The sequence spans 547 residues: Chaperonin GroEL (547 aa).

ATP contacts are provided by residues 30–33 (TLGP), lysine 51, 87–91 (DGTTT), glycine 415, 479–481 (NAA), and aspartate 495. The interval 525–547 (PKEDKPDLGGGNPGGAGGMGGMM) is disordered. Positions 532 to 547 (LGGGNPGGAGGMGGMM) are enriched in gly residues.

It belongs to the chaperonin (HSP60) family. Forms a cylinder of 14 subunits composed of two heptameric rings stacked back-to-back. Interacts with the co-chaperonin GroES.

It is found in the cytoplasm. It catalyses the reaction ATP + H2O + a folded polypeptide = ADP + phosphate + an unfolded polypeptide.. Together with its co-chaperonin GroES, plays an essential role in assisting protein folding. The GroEL-GroES system forms a nano-cage that allows encapsulation of the non-native substrate proteins and provides a physical environment optimized to promote and accelerate protein folding. This is Chaperonin GroEL from Blochmanniella floridana.